A 537-amino-acid chain; its full sequence is [Pyruvate dehydrogenase [acetyl-transferring]]-phosphatase 1, mitochondrial (537 aa).

The N-terminal 71 residues, 1 to 71 (MPAPTQLFFP…WWQYTQGRRY (71 aa)), are a transit peptide targeting the mitochondrion. The PPM-type phosphatase domain maps to 109-525 (ILGFDSNQLP…DDITIIVVQF (417 aa)). Mn(2+) is bound by residues D144 and G145. K202 is subject to N6-acetyllysine. Residues D418 and D516 each contribute to the Mn(2+) site.

Belongs to the PP2C family. As to quaternary structure, heterodimer of a catalytic (PDP1) and a regulatory (PDPR) subunit. Mn(2+) serves as cofactor. The cofactor is Mg(2+).

The protein resides in the mitochondrion. It catalyses the reaction O-phospho-L-seryl-[pyruvate dehydrogenase E1 alpha subunit] + H2O = L-seryl-[pyruvate dehydrogenase E1 alpha subunit] + phosphate. Its activity is regulated as follows. Magnesium-dependent and calcium-stimulated. PDP1 activity strongly depends on its Ca(2+)-dependent binding to the lipoyl domain of E2 subunit of component of the pyruvate dehydrogenase complex. Its function is as follows. Mitochondrial enzyme that catalyzes the dephosphorylation and concomitant reactivation of the alpha subunit of the E1 component of the pyruvate dehydrogenase complex (PDC), thereby stimulating the conversion of pyruvate into acetyl-CoA. The chain is [Pyruvate dehydrogenase [acetyl-transferring]]-phosphatase 1, mitochondrial from Homo sapiens (Human).